A 1215-amino-acid chain; its full sequence is MGAMAYPLLLCLLLAQLGLGAVGASRDPQGRPDSPRERTPKGKPHAQQPGRASASDSSAPWSRSTDGTILAQKLAEEVPMDVASYLYTGDSHQLKRANCSGRYELAGLPGKWPALASAHPSLHRALDTLTHATNFLNVMLQSNKSREQNLQDDLDWYQALVWSLLEGEPSISRAAITFSTDSLSAPAPQVFLQATREESRILLQDLSSSAPHLANATLETEWFHGLRRKWRPHLHRRGPNQGPRGLGHSWRRKDGLGGDKSHFKWSPPYLECENGSYKPGWLVTLSSAIYGLQPNLVPEFRGVMKVDINLQKVDIDQCSSDGWFSGTHKCHLNNSECMPIKGLGFVLGAYECICKAGFYHPGVLPVNNFRRRGPDQHISGSTKDVSEEAYVCLPCREGCPFCADDSPCFVQEDKYLRLAIISFQALCMLLDFVSMLVVYHFRKAKSIRASGLILLETILFGSLLLYFPVVILYFEPSTFRCILLRWARLLGFATVYGTVTLKLHRVLKVFLSRTAQRIPYMTGGRVMRMLAVILLVVFWFLIGWTSSVCQNLEKQISLIGQGKTSDHLIFNMCLIDRWDYMTAVAEFLFLLWGVYLCYAVRTVPSAFHEPRYMAVAVHNELIISAIFHTIRFVLASRLQSDWMLMLYFAHTHLTVTVTIGLLLIPKFSHSSNNPRDDIATEAYEDELDMGRSGSYLNSSINSAWSEHSLDPEDIRDELKKLYAQLEIYKRKKMITNNPHLQKKRCSKKGLGRSIMRRITEIPETVSRQCSKEDKEGADHGTAKGTALIRKNPPESSGNTGKSKEETLKNRVFSLKKSHSTYDHVRDQTEESSSLPTESQEEETTENSTLESLSGKKLTQKLKEDSEAESTESVPLVCKSASAHNLSSEKKTGHPRTSMLQKSLSVIASAKEKTLGLAGKTQTAGVEERTKSQKPLPKDKETNRNHSNSDNTETKDPAPQNSNPAEEPRKPQKSGIMKQQRVNPTTANSDLNPGTTQMKDNFDIGEVCPWEVYDLTPGPVPSESKVQKHVSIVASEMEKNPTFSLKEKSHHKPKAAEVCQQSNQKRIDKAEVCLWESQGQSILEDEKLLISKTPVLPERAKEENGGQPRAANVCAGQSEELPPKAVASKTENENLNQIGHQEKKTSSSEENVRGSYNSSNNFQQPLTSRAEVCPWEFETPAQPNAGRSVALPASSALSANKIAGPRKEEIWDSFKV.

The signal sequence occupies residues 1–23 (MGAMAYPLLLCLLLAQLGLGAVG). A disordered region spans residues 23-66 (GASRDPQGRPDSPRERTPKGKPHAQQPGRASASDSSAPWSRSTD). The Extracellular portion of the chain corresponds to 24–417 (ASRDPQGRPD…CFVQEDKYLR (394 aa)). Residues 28-40 (PQGRPDSPRERTP) are compositionally biased toward basic and acidic residues. Over residues 52–64 (ASASDSSAPWSRS) the composition is skewed to low complexity. The tract at residues 85–281 (YLYTGDSHQL…CENGSYKPGW (197 aa)) is cache-like region. N-linked (GlcNAc...) asparagine glycosylation is found at Asn98 and Asn143. The cysteines at positions 99 and 272 are disulfide-linked. Residues Ser172 and Arg173 each coordinate glycine. Asn215 carries an N-linked (GlcNAc...) asparagine glycan. Glu271 contacts glycine. Asn274 is a glycosylation site (N-linked (GlcNAc...) asparagine). Asp307 is a binding site for glycine. Asn333 carries N-linked (GlcNAc...) asparagine glycosylation. The chain crosses the membrane as a helical span at residues 418–439 (LAIISFQALCMLLDFVSMLVVY). Over 440–451 (HFRKAKSIRASG) the chain is Cytoplasmic. A helical transmembrane segment spans residues 452–474 (LILLETILFGSLLLYFPVVILYF). Residues 475-478 (EPST) are Extracellular-facing. The helical transmembrane segment at 479–501 (FRCILLRWARLLGFATVYGTVTL) threads the bilayer. Cysteines 481 and 573 form a disulfide. The Cytoplasmic segment spans residues 502–525 (KLHRVLKVFLSRTAQRIPYMTGGR). Residues 526–547 (VMRMLAVILLVVFWFLIGWTSS) form a helical membrane-spanning segment. Residues 548–576 (VCQNLEKQISLIGQGKTSDHLIFNMCLID) lie on the Extracellular side of the membrane. Residues 577-597 (RWDYMTAVAEFLFLLWGVYLC) form a helical membrane-spanning segment. Over 598–611 (YAVRTVPSAFHEPR) the chain is Cytoplasmic. The helical transmembrane segment at 612-633 (YMAVAVHNELIISAIFHTIRFV) threads the bilayer. Topologically, residues 634 to 642 (LASRLQSDW) are extracellular. A helical transmembrane segment spans residues 643–664 (MLMLYFAHTHLTVTVTIGLLLI). The Cytoplasmic portion of the chain corresponds to 665 to 1215 (PKFSHSSNNP…KEEIWDSFKV (551 aa)). Phosphoserine occurs at positions 694, 705, and 708. A disordered region spans residues 757–999 (RITEIPETVS…LNPGTTQMKD (243 aa)). Composition is skewed to basic and acidic residues over residues 769–781 (CSKE…DHGT) and 819–828 (STYDHVRDQT). Residue Lys774 forms a Glycyl lysine isopeptide (Lys-Gly) (interchain with G-Cter in ubiquitin) linkage. Ser865 carries the phosphoserine modification. Over residues 925-943 (VEERTKSQKPLPKDKETNR) the composition is skewed to basic and acidic residues. Position 946 is a phosphoserine (Ser946). Residues 979 to 998 (QRVNPTTANSDLNPGTTQMK) show a composition bias toward polar residues. 2 short sequence motifs (VCPWE motif) span residues 1006-1010 (VCPWE) and 1071-1075 (VCLWE). The residue at position 1080 (Ser1080) is a Phosphoserine. The interval 1117–1164 (SEELPPKAVASKTENENLNQIGHQEKKTSSSEENVRGSYNSSNNFQQP) is disordered. Basic and acidic residues predominate over residues 1139-1151 (HQEKKTSSSEENV). Over residues 1153 to 1164 (GSYNSSNNFQQP) the composition is skewed to polar residues. A VCPWE motif 3 motif is present at residues 1171-1175 (VCPWE).

Belongs to the G-protein coupled receptor 3 family. Homodimer. Associates with the RGS7-GNB5 complex, promoting its localization to the cell membrane and regulating its GTPase activator activity. Interacts (via VCPWE motifs) with GNAO1. Interacts with GPC4. Interacts with EGFLAM.

The protein localises to the cell membrane. Its subcellular location is the postsynaptic cell membrane. The protein resides in the presynaptic cell membrane. It localises to the nucleus. In terms of biological role, metabotropic receptor for glycine that controls synapse formation and function in the brain. Acts as an atypical G-protein coupled receptor that recruits and regulates the RGS7-GNB5 complex instead of activating G proteins. In absence of glycine ligand, promotes the GTPase activator activity of RGS7, increasing the GTPase activity of G protein alpha subunits, thereby driving them into their inactive GDP-bound form. Glycine-binding changes the conformation of the intracellular surface, inhibiting the GTPase activator activity of the RGS7-GNB5 complex, promoting G protein alpha subunits into their active GTP-bound form and regulating cAMP levels. Also able to bind taurine, a compound closely related to glycine, but with a two-fold lower affinity. Glycine receptor-dependent regulation of cAMP controls key ion channels, kinases and neurotrophic factors involved in neuronal excitability and synaptic transmission. Plays a pivotal role in regulating mood and cognition via its ability to regulate neuronal excitability in L2/L3 pyramidal neurons of the prefrontal cortex. Also involved in spatial learning by regulating hippocampal CA1 neuronal excitability. Acts as a synaptic organizer in the hippocampus, required for proper mossy fiber-CA3 neurocircuitry establishment, structure and function: induces presynaptic differentiation in contacting axons via its interaction with GPC4. In addition to glycine, may also act as a receptor for osteocalcin (BGLAP) hormone: osteocalcin-binding initiates a signaling response that prevents neuronal apoptosis in the hippocampus and regulates the synthesis of neurotransmitters. The polypeptide is Metabotropic glycine receptor (Homo sapiens (Human)).